The primary structure comprises 125 residues: Small ribosomal subunit protein eS6 (125 aa).

It belongs to the eukaryotic ribosomal protein eS6 family. In terms of assembly, part of the 30S ribosomal subunit.

The sequence is that of Small ribosomal subunit protein eS6 from Thermococcus kodakarensis (strain ATCC BAA-918 / JCM 12380 / KOD1) (Pyrococcus kodakaraensis (strain KOD1)).